Here is a 254-residue protein sequence, read N- to C-terminus: Phosphoribosylaminoimidazole-succinocarboxamide synthase (254 aa).

This sequence belongs to the SAICAR synthetase family.

It catalyses the reaction 5-amino-1-(5-phospho-D-ribosyl)imidazole-4-carboxylate + L-aspartate + ATP = (2S)-2-[5-amino-1-(5-phospho-beta-D-ribosyl)imidazole-4-carboxamido]succinate + ADP + phosphate + 2 H(+). Its pathway is purine metabolism; IMP biosynthesis via de novo pathway; 5-amino-1-(5-phospho-D-ribosyl)imidazole-4-carboxamide from 5-amino-1-(5-phospho-D-ribosyl)imidazole-4-carboxylate: step 1/2. The chain is Phosphoribosylaminoimidazole-succinocarboxamide synthase from Acidiphilium cryptum (strain JF-5).